Reading from the N-terminus, the 195-residue chain is Protein GrpE (195 aa).

Belongs to the GrpE family. In terms of assembly, homodimer.

The protein resides in the cytoplasm. Participates actively in the response to hyperosmotic and heat shock by preventing the aggregation of stress-denatured proteins, in association with DnaK and GrpE. It is the nucleotide exchange factor for DnaK and may function as a thermosensor. Unfolded proteins bind initially to DnaJ; upon interaction with the DnaJ-bound protein, DnaK hydrolyzes its bound ATP, resulting in the formation of a stable complex. GrpE releases ADP from DnaK; ATP binding to DnaK triggers the release of the substrate protein, thus completing the reaction cycle. Several rounds of ATP-dependent interactions between DnaJ, DnaK and GrpE are required for fully efficient folding. This Francisella tularensis subsp. holarctica (strain FTNF002-00 / FTA) protein is Protein GrpE.